Consider the following 107-residue polypeptide: Iron-binding protein IscA (107 aa).

Residues Cys35, Cys99, and Cys101 each coordinate Fe cation.

This sequence belongs to the HesB/IscA family. In terms of assembly, homodimer; may form tetramers and higher multimers. The cofactor is Fe cation.

Its function is as follows. Is able to transfer iron-sulfur clusters to apo-ferredoxin. Multiple cycles of [2Fe2S] cluster formation and transfer are observed, suggesting that IscA acts catalytically. Recruits intracellular free iron so as to provide iron for the assembly of transient iron-sulfur cluster in IscU in the presence of IscS, L-cysteine and the thioredoxin reductase system TrxA/TrxB. The chain is Iron-binding protein IscA from Klebsiella pneumoniae subsp. pneumoniae (strain ATCC 700721 / MGH 78578).